Here is a 237-residue protein sequence, read N- to C-terminus: Putative ATP-binding protein BMEII0108 (237 aa).

Positions 5–205 constitute an ABC transporter domain; the sequence is ISFNNVVMRY…DLPYPRTEAI (201 aa). ATP is bound at residue 37–44; sequence GPSGCGKS.

Belongs to the ABC transporter superfamily. The complex is composed of two ATP-binding proteins (BMEII0108), two transmembrane proteins (BMEII0107) and a solute-binding protein (BMEII0109).

Its subcellular location is the cell inner membrane. Its function is as follows. Probably part of an ABC transporter complex. Probably Responsible for energy coupling to the transport system. This Brucella melitensis biotype 1 (strain ATCC 23456 / CCUG 17765 / NCTC 10094 / 16M) protein is Putative ATP-binding protein BMEII0108.